A 250-amino-acid polypeptide reads, in one-letter code: ATP synthase subunit a (250 aa).

A run of 6 helical transmembrane segments spans residues 29-49, 84-104, 114-134, 143-163, 193-213, and 216-236; these read ASLFMAASAAVAVGFLYFATS, FFPLVFSLFMFVLTANLLGMF, IIVTFALAILVIGTVLVYGFY, VFVPSGVPGILLPLVVAIEII, FVASLGALGAVGVGGAVLPLI, and VALTGLEFLVAFLQAYVFAVL.

The protein belongs to the ATPase A chain family. As to quaternary structure, F-type ATPases have 2 components, CF(1) - the catalytic core - and CF(0) - the membrane proton channel. CF(1) has five subunits: alpha(3), beta(3), gamma(1), delta(1), epsilon(1). CF(0) has three main subunits: a(1), b(2) and c(9-12). The alpha and beta chains form an alternating ring which encloses part of the gamma chain. CF(1) is attached to CF(0) by a central stalk formed by the gamma and epsilon chains, while a peripheral stalk is formed by the delta and b chains.

Its subcellular location is the cell inner membrane. Functionally, key component of the proton channel; it plays a direct role in the translocation of protons across the membrane. The sequence is that of ATP synthase subunit a from Rhizobium etli (strain CIAT 652).